We begin with the raw amino-acid sequence, 848 residues long: DIS3-like exonuclease 2 (848 aa).

The disordered stretch occupies residues 153 to 173; it reads KGDRNSGKTDNNSPNKTEKRC. Mg(2+) is bound by residues Asp-345 and Asp-354.

This sequence belongs to the RNR ribonuclease family. DIS3L2 subfamily. Mg(2+) is required as a cofactor. The cofactor is Mn(2+). Post-translationally, cleaved by caspase ced-3 in vitro.

The protein resides in the cytoplasm. The protein localises to the P-body. 3'-5'-exoribonuclease that specifically recognizes RNAs polyuridylated at their 3' end and mediates their degradation. Component of an exosome-independent RNA degradation pathway that mediates degradation of cytoplasmic mRNAs that have been deadenylated and subsequently uridylated at their 3'. The polypeptide is DIS3-like exonuclease 2 (Caenorhabditis elegans).